The sequence spans 309 residues: Elongation factor Ts (309 aa).

Residues threonine 80–valine 83 are involved in Mg(2+) ion dislocation from EF-Tu.

This sequence belongs to the EF-Ts family.

The protein resides in the cytoplasm. Its function is as follows. Associates with the EF-Tu.GDP complex and induces the exchange of GDP to GTP. It remains bound to the aminoacyl-tRNA.EF-Tu.GTP complex up to the GTP hydrolysis stage on the ribosome. The chain is Elongation factor Ts from Rhodospirillum rubrum (strain ATCC 11170 / ATH 1.1.1 / DSM 467 / LMG 4362 / NCIMB 8255 / S1).